The chain runs to 311 residues: tRNA-cytidine(32) 2-sulfurtransferase (311 aa).

Positions Ser47–Ser52 match the PP-loop motif motif. Residues Cys122, Cys125, and Cys213 each coordinate [4Fe-4S] cluster.

Belongs to the TtcA family. In terms of assembly, homodimer. The cofactor is Mg(2+). [4Fe-4S] cluster is required as a cofactor.

It localises to the cytoplasm. It catalyses the reaction cytidine(32) in tRNA + S-sulfanyl-L-cysteinyl-[cysteine desulfurase] + AH2 + ATP = 2-thiocytidine(32) in tRNA + L-cysteinyl-[cysteine desulfurase] + A + AMP + diphosphate + H(+). It participates in tRNA modification. Its function is as follows. Catalyzes the ATP-dependent 2-thiolation of cytidine in position 32 of tRNA, to form 2-thiocytidine (s(2)C32). The sulfur atoms are provided by the cysteine/cysteine desulfurase (IscS) system. The protein is tRNA-cytidine(32) 2-sulfurtransferase of Escherichia coli O1:K1 / APEC.